A 443-amino-acid chain; its full sequence is MEAYIRQKRASPGMVQASDLQINRPMSGMRSNSRELHAYDGPMQFISSPQNPDQILTNGSPGGINSVAMNTSRNHSNNMRSLSTINQEADLIEEISSHELEDEESSPVTVIEQQQQSASHSANSTQSQKPRARQHSFSDNLDEDDYTNRNVAGAAPVRPAGMASSPYKDATLDGSSNGTGNGTGGESEGDVIGNIDQFVMQPAPQGVLYKCRITRDRKGMDRGLFPIYYLHLERDYGKKIFLLGGRKRKKSKTSNYIVSCDPTDLSRNADGFCGKLRSNVFGTSFTVFDNGNKESTESPRLDLAVIIYDTNILGFKGPRNMTVILPGMTEDDQRVKISSADPKQQGILDLWKMKNMDNIVELHNKTPVWNDETQSYVLNFHGRVTQASVKNFQLVHDSDPEYIVMQFGRTSEDVFTMDYRYPLCAMQAFAIALSSFDGKIACE.

Disordered stretches follow at residues 57–80 (TNGSPGGINSVAMNTSRNHSNNMR) and 98–191 (HELE…EGDV). The segment covering 67-80 (VAMNTSRNHSNNMR) has biased composition (polar residues). Residues 113–128 (QQQQSASHSANSTQSQ) are compositionally biased toward low complexity. Phosphoserine is present on S136. Over residues 177–186 (NGTGNGTGGE) the composition is skewed to gly residues.

Belongs to the TUB family.

The protein localises to the cytoplasm. The protein resides in the nucleus. It is found in the cell projection. Its subcellular location is the cilium membrane. It localises to the rhabdomere. The chain is Protein king tubby from Drosophila sechellia (Fruit fly).